The following is an 88-amino-acid chain: Small ribosomal subunit protein bS20 (88 aa).

The segment at 69-88 (KNTASRKKSRLTKRFNKLTG) is disordered. Basic residues predominate over residues 71 to 88 (TASRKKSRLTKRFNKLTG).

Belongs to the bacterial ribosomal protein bS20 family.

Its function is as follows. Binds directly to 16S ribosomal RNA. The sequence is that of Small ribosomal subunit protein bS20 from Pelotomaculum thermopropionicum (strain DSM 13744 / JCM 10971 / SI).